The following is a 578-amino-acid chain: Phosphoenolpyruvate-protein phosphotransferase (578 aa).

The Tele-phosphohistidine intermediate role is filled by histidine 195. Residues arginine 302 and arginine 338 each contribute to the phosphoenolpyruvate site. Mg(2+)-binding residues include glutamate 437 and aspartate 461. Residues 460–461 (ND) and arginine 471 each bind phosphoenolpyruvate. Cysteine 508 functions as the Proton donor in the catalytic mechanism.

The protein belongs to the PEP-utilizing enzyme family. Homodimer. Mg(2+) serves as cofactor.

The protein resides in the cytoplasm. It carries out the reaction L-histidyl-[protein] + phosphoenolpyruvate = N(pros)-phospho-L-histidyl-[protein] + pyruvate. Functionally, general (non sugar-specific) component of the phosphoenolpyruvate-dependent sugar phosphotransferase system (sugar PTS). This major carbohydrate active-transport system catalyzes the phosphorylation of incoming sugar substrates concomitantly with their translocation across the cell membrane. Enzyme I transfers the phosphoryl group from phosphoenolpyruvate (PEP) to the phosphoryl carrier protein (HPr). This Bacillus sp. (strain S) protein is Phosphoenolpyruvate-protein phosphotransferase (ptsI).